A 729-amino-acid chain; its full sequence is Neurochondrin (729 aa).

At S2 the chain carries N-acetylserine. S2 is subject to Phosphoserine. 2 S-palmitoyl cysteine lipidation sites follow: C3 and C4. Position 75 is an asymmetric dimethylarginine (R75). Position 448 is a phosphoserine (S448).

Belongs to the neurochondrin family. Interacts with MCHR1. Interacts with SEMA4C. Interacts with DIAPH1 (via FH3 domain). Interacts with GRM5. Palmitoylated. Palmitoylation by ZDHHC1, ZDHHC3 and ZDHHC11 regulates the association of NCDN with endosome membranes. May also be palmitoylated by ZDHHC7.

Its subcellular location is the cytoplasm. The protein localises to the cytosol. The protein resides in the endosome membrane. It localises to the cell projection. It is found in the dendrite. Its subcellular location is the postsynapse. Probably involved in signal transduction, in the nervous system, via increasing cell surface localization of GRM5 and positively regulating its signaling. Required for the spatial learning process. Acts as a negative regulator of Ca(2+)-calmodulin-dependent protein kinase 2 (CaMK2) phosphorylation. May play a role in modulating melanin-concentrating hormone-mediated functions via its interaction with MCHR1 that interferes with G protein-coupled signal transduction. May be involved in bone metabolism. May also be involved in neurite outgrowth. The chain is Neurochondrin (NCDN) from Bos taurus (Bovine).